A 340-amino-acid chain; its full sequence is Ferrochelatase (340 aa).

2 residues coordinate Fe cation: His-189 and Glu-292.

The protein belongs to the ferrochelatase family.

The protein localises to the cytoplasm. The catalysed reaction is heme b + 2 H(+) = protoporphyrin IX + Fe(2+). It functions in the pathway porphyrin-containing compound metabolism; protoheme biosynthesis; protoheme from protoporphyrin-IX: step 1/1. Functionally, catalyzes the ferrous insertion into protoporphyrin IX. The chain is Ferrochelatase from Pseudomonas aeruginosa (strain UCBPP-PA14).